Consider the following 534-residue polypeptide: Cytochrome P450 78A9 (534 aa).

A helical transmembrane segment spans residues 26-46 (LALSLLVASLASLALSLFFWS). Cys474 contacts heme.

It belongs to the cytochrome P450 family. It depends on heme as a cofactor. In terms of tissue distribution, expressed in the funiculus of developing ovules.

It is found in the membrane. Its function is as follows. Plays a role in seed and fruit development. Functions probably in association with CYP78A6 in the regulation of seed growth. The sequence is that of Cytochrome P450 78A9 (CYP78A9) from Arabidopsis thaliana (Mouse-ear cress).